A 572-amino-acid chain; its full sequence is Putative inorganic phosphate transporter C8E4.01c (572 aa).

The Cytoplasmic portion of the chain corresponds to 1–47 (MAFGSKILNIGSKSDEYNDDAVPLDQVEEGAQERRYYLGLTKREFKL). Ser-12 and Ser-14 each carry phosphoserine. A helical transmembrane segment spans residues 48–68 (MMLAGVGFFLDSYDLFIINLV). The Extracellular portion of the chain corresponds to 69 to 99 (TPIFEYLYWGGIEKGPTGKGHYPSGIRGLVN). The chain crosses the membrane as a helical span at residues 100–120 (ASANIGNIFGQLLFGFMGDFF). Over 121–123 (GRK) the chain is Cytoplasmic. Residues 124–144 (FVYGKEMVIVIIATVLVIAMP) form a helical membrane-spanning segment. The Extracellular portion of the chain corresponds to 145–153 (KSIHSPLSK). A helical transmembrane segment spans residues 154-174 (MMWVFCWRWLLGVGIGGDYPM). Topologically, residues 175-193 (SAAITSERSKIKRRGTLIS) are cytoplasmic. The helical transmembrane segment at 194-214 (LIFAFQGFGTLAGAIVTIILL) threads the bilayer. Residues 215-229 (GCFEHPLNREGHYHK) are Extracellular-facing. The chain crosses the membrane as a helical span at residues 230–250 (LEGVWRLQFGLALVPAIGVLI). Residues 251–346 (PRLIMKESKS…TYFRQWRHFK (96 aa)) are Cytoplasmic-facing. Residues 265–297 (KALNSAEGKDPKAFFNTDDEDNMKKSSSHGDSE) form a disordered region. Basic and acidic residues predominate over residues 286-296 (NMKKSSSHGDS). Phosphoserine occurs at positions 292 and 296. The chain crosses the membrane as a helical span at residues 347 to 367 (HLLGTSVCWFLLDIAFYGVNL). The Extracellular portion of the chain corresponds to 368–395 (NQSVILKNIGFSTGTNEYRTLMKNAIGN). Residues 396–416 (LIIAVAGYVPGYWFNVFLVEI) form a helical membrane-spanning segment. Residues 417–420 (LGRK) lie on the Cytoplasmic side of the membrane. Residues 421–441 (WIQLQGFVITGLMFAILAGRW) form a helical membrane-spanning segment. The Extracellular segment spans residues 442-449 (NEISTGGR). Residues 450–470 (FACFVIAQLFSNFGPNSTTFI) form a helical membrane-spanning segment. At 471 to 485 (YPAEVFPARVRGTAH) the chain is on the cytoplasmic side. Residues 486–506 (GVSAALGKCGAILASLLFNFL) traverse the membrane as a helical segment. The Extracellular segment spans residues 507-508 (TG). A helical transmembrane segment spans residues 509–529 (VIGYGNVMWIFCGCMWGGILF). The Cytoplasmic portion of the chain corresponds to 530–572 (TLLLPETKGRDADEIDRLELFYGKDGKVQCDSKWKSWYFNGIF).

Belongs to the major facilitator superfamily. Sugar transporter (TC 2.A.1.1) family.

The protein localises to the membrane. In terms of biological role, high-affinity transporter for external inorganic phosphate. The polypeptide is Putative inorganic phosphate transporter C8E4.01c (Schizosaccharomyces pombe (strain 972 / ATCC 24843) (Fission yeast)).